The sequence spans 439 residues: Cell division protein DivIB (439 aa).

Disordered regions lie at residues 1–96 (MDDK…DSNI) and 119–149 (DNEQ…KSKV). The Cytoplasmic segment spans residues 1 to 173 (MDDKTKNDQQ…RRKRQKRIQY (173 aa)). Positions 11 to 20 (ESNEDKDELE) are enriched in acidic residues. Over residues 26-38 (TSKKRRQRKRSKA) the composition is skewed to basic residues. Residues 64–76 (KDFKKEESNDKNN) are compositionally biased toward basic and acidic residues. Positions 77-86 (DSASSHANDN) are enriched in low complexity. The segment covering 87 to 96 (NIDDSTDSNI) has biased composition (acidic residues). Polar residues predominate over residues 119–133 (DNEQPQSAPKEQNSD). The helical transmembrane segment at 174 to 194 (SVITILVLLIAVILIYMFSPL) threads the bilayer. A POTRA domain is found at 195–263 (SKIAHVNING…NTLNVDITEN (69 aa)). Residues 195 to 439 (SKIAHVNING…KINKQSSKNN (245 aa)) lie on the Extracellular side of the membrane. The tract at residues 396-439 (YRGNTSSQSESDKNVTKSSQEENQAKEELQSVLNKINKQSSKNN) is disordered. The segment covering 405–424 (ESDKNVTKSSQEENQAKEEL) has biased composition (basic and acidic residues). Positions 426–439 (SVLNKINKQSSKNN) are enriched in polar residues.

This sequence belongs to the FtsQ/DivIB family. DivIB subfamily.

The protein resides in the cell membrane. Its function is as follows. Cell division protein that may be involved in stabilizing or promoting the assembly of the division complex. The chain is Cell division protein DivIB from Staphylococcus aureus (strain NCTC 8325 / PS 47).